A 151-amino-acid chain; its full sequence is Aspartate carbamoyltransferase regulatory chain (151 aa).

The Zn(2+) site is built by cysteine 108, cysteine 113, cysteine 138, and cysteine 141.

The protein belongs to the PyrI family. In terms of assembly, contains catalytic and regulatory chains. Zn(2+) is required as a cofactor.

Functionally, involved in allosteric regulation of aspartate carbamoyltransferase. This chain is Aspartate carbamoyltransferase regulatory chain, found in Pyrobaculum neutrophilum (strain DSM 2338 / JCM 9278 / NBRC 100436 / V24Sta) (Thermoproteus neutrophilus).